The following is a 515-amino-acid chain: 1-pyrroline-5-carboxylate dehydrogenase (515 aa).

Catalysis depends on residues Glu286 and Cys320.

The protein belongs to the aldehyde dehydrogenase family. RocA subfamily.

The enzyme catalyses L-glutamate 5-semialdehyde + NAD(+) + H2O = L-glutamate + NADH + 2 H(+). It functions in the pathway amino-acid degradation; L-proline degradation into L-glutamate; L-glutamate from L-proline: step 2/2. The polypeptide is 1-pyrroline-5-carboxylate dehydrogenase (Geobacillus thermodenitrificans (strain NG80-2)).